Consider the following 489-residue polypeptide: Rhamnulokinase (489 aa).

An ATP-binding site is contributed by 13-17 (ASSGR). Cys-68 and Cys-222 are disulfide-bonded. Substrate-binding positions include Gly-83 and 236-238 (HDT). Asp-237 acts as the Proton acceptor in catalysis. Thr-259 lines the ATP pocket. A substrate-binding site is contributed by Asn-296. Gln-304 contacts ATP. Cys-353 and Cys-370 are joined by a disulfide. Gly-402 serves as a coordination point for ATP. A disulfide bond links Cys-413 and Cys-417.

The protein belongs to the rhamnulokinase family. Monomer. It depends on Mg(2+) as a cofactor.

The catalysed reaction is L-rhamnulose + ATP = L-rhamnulose 1-phosphate + ADP + H(+). The protein operates within carbohydrate degradation; L-rhamnose degradation; glycerone phosphate from L-rhamnose: step 2/3. Its function is as follows. Involved in the catabolism of L-rhamnose (6-deoxy-L-mannose). Catalyzes the transfer of the gamma-phosphate group from ATP to the 1-hydroxyl group of L-rhamnulose to yield L-rhamnulose 1-phosphate. The chain is Rhamnulokinase from Escherichia coli (strain K12 / DH10B).